The sequence spans 126 residues: Small ribosomal subunit protein uS12m (126 aa).

2 disordered regions span residues 1 to 27 (MPTM…LNKC) and 106 to 126 (GIPG…KDYI). Basic residues-rich tracts occupy residues 12–23 (RESKRRTKRTRA) and 109–120 (GRRRGRSKYGTK).

This sequence belongs to the universal ribosomal protein uS12 family.

The protein localises to the mitochondrion. Functionally, protein S12 is involved in the translation initiation step. This chain is Small ribosomal subunit protein uS12m (RPS12), found in Marchantia polymorpha (Common liverwort).